The following is a 512-amino-acid chain: Polyamine oxidase 1 (512 aa).

FAD is bound by residues Glu-38 and Arg-46. A disordered region spans residues 448 to 470; that stretch reads DRMAEPLPRGPDAAADERPPSPR. Residue Glu-476 participates in FAD binding.

Belongs to the flavin monoamine oxidase family. FAD is required as a cofactor.

The protein localises to the cytoplasm. It carries out the reaction spermine + O2 + H2O = 3-aminopropanal + spermidine + H2O2. It catalyses the reaction N(1)-acetylspermine + O2 + H2O = 3-acetamidopropanal + spermidine + H2O2. The catalysed reaction is norspermine + O2 + H2O = norspermidine + 3-aminopropanal + H2O2. The enzyme catalyses thermospermine + O2 + H2O = 3-aminopropanal + spermidine + H2O2. Its pathway is amine and polyamine degradation; spermine degradation. Flavoenzyme involved in polyamine back-conversion. Catalyzes the oxidation of the secondary amino group of polyamines, such as spermine and its acetyl derivatives. Substrate preference is thermospermine &gt; spermine &gt; norspermine &gt; N(1)-acetylspermine. No activity detected when putrescine or spermidine are used as substrates. Plays an important role in the regulation of polyamine intracellular concentration. The chain is Polyamine oxidase 1 from Oryza sativa subsp. japonica (Rice).